A 148-amino-acid chain; its full sequence is NADPH-dependent 7-cyano-7-deazaguanine reductase (148 aa).

Residue C50 is the Thioimide intermediate of the active site. Catalysis depends on D57, which acts as the Proton donor. Residues 72 to 74 (VES) and 91 to 92 (HE) contribute to the substrate site.

It belongs to the GTP cyclohydrolase I family. QueF type 1 subfamily.

It localises to the cytoplasm. The enzyme catalyses 7-aminomethyl-7-carbaguanine + 2 NADP(+) = 7-cyano-7-deazaguanine + 2 NADPH + 3 H(+). The protein operates within tRNA modification; tRNA-queuosine biosynthesis. Functionally, catalyzes the NADPH-dependent reduction of 7-cyano-7-deazaguanine (preQ0) to 7-aminomethyl-7-deazaguanine (preQ1). The sequence is that of NADPH-dependent 7-cyano-7-deazaguanine reductase from Helicobacter pylori (strain J99 / ATCC 700824) (Campylobacter pylori J99).